Here is a 1230-residue protein sequence, read N- to C-terminus: SAM and SH3 domain-containing protein 1 (1230 aa).

Residues 1–10 (MEEDAGAASP) are compositionally biased toward low complexity. The disordered stretch occupies residues 1–30 (MEEDAGAASPAPEPEPEVDPARELEPEAGV). A phosphoserine mark is found at S83 and S241. 2 disordered regions span residues 211–249 (RQSSTLDPADWPDGSYPTLDGSSTCNSREQSDDETEDSV) and 275–337 (KKPS…LDTW). Residues 275–297 (KKPSAEGGEEHVFENSPVQDERS) are compositionally biased toward basic and acidic residues. Positions 324–336 (SLTPSPSSSSLDT) are enriched in low complexity. S400 is modified (phosphoserine). Disordered regions lie at residues 439-566 (PRIS…YDTD), 610-633 (EEKPKRPTRRRKKGRPSQPKSVED), and 705-792 (VDNQ…KSCD). Polar residues predominate over residues 461–470 (KYSSPVSEQD). The span at 485–494 (PDSEHVDKPK) shows a compositional bias: basic and acidic residues. Over residues 498–516 (GGSVESLRSSLSGQSSMSG) the composition is skewed to low complexity. Residues 517–529 (QTVSTTDSSTSNR) are compositionally biased toward polar residues. The region spanning 547–608 (PFCGRARVHT…KFIYVDVLNE (62 aa)) is the SH3 domain. Basic residues predominate over residues 615–624 (RPTRRRKKGR). In terms of domain architecture, SAM 1 spans 626-690 (SQPKSVEDLL…LTAVELLQEY (65 aa)). Over residues 737 to 758 (VLSTKSSTESNLKSFTRSQPGN) the composition is skewed to polar residues. Basic and acidic residues predominate over residues 768-779 (GEVRKQGEEGRL). 2 positions are modified to phosphoserine: S813 and S831. Disordered stretches follow at residues 818-875 (EGPE…LPRG) and 915-1045 (PPQC…PWLA). The required for interaction with TRAF6 stretch occupies residues 844 to 852 (NVPTEMPET). Over residues 852-868 (TCSQNVPEVPQKTSACT) the composition is skewed to polar residues. The segment covering 940-956 (GLRKGHDHHPLGTKEGV) has biased composition (basic and acidic residues). Positions 962–972 (APETRTQSRHP) are enriched in polar residues. The segment covering 1008 to 1019 (SPASPVSPSDCP) has biased composition (low complexity). In terms of domain architecture, SAM 2 spans 1160 to 1224 (GCVASMSDWL…ITAARLFKLP (65 aa)).

Interacts with GNAS. Interacts with IQGAP1. Interacts with TRAF6 (via C-terminus); the interaction is LPS-dependent. Interacts with MAP3K7, CHUK and IKBKB. As to expression, expressed in the microvascular endothelium of various organs, as well as in parenchymal cells. Expressed in the endothelium but not lymphoid cells of spleen and thymus.

Its subcellular location is the cytoplasm. Functionally, is a positive regulator of NF-kappa-B signaling downstream of TLR4 activation. It acts as a scaffold molecule to assemble a molecular complex that includes TRAF6, MAP3K7, CHUK and IKBKB, thereby facilitating NF-kappa-B signaling activation. Regulates TRAF6 and MAP3K7 ubiquitination. Involved in the regulation of cell mobility. Regulates lipolysaccharide (LPS)-induced endothelial cell migration. Is involved in the regulation of skin pigmentation through the control of melanocyte migration in the epidermis. The sequence is that of SAM and SH3 domain-containing protein 1 (Sash1) from Mus musculus (Mouse).